The chain runs to 216 residues: Ribosome maturation factor RimP (216 aa).

It belongs to the RimP family.

The protein localises to the cytoplasm. Functionally, required for maturation of 30S ribosomal subunits. In Bartonella quintana (strain Toulouse) (Rochalimaea quintana), this protein is Ribosome maturation factor RimP.